The primary structure comprises 73 residues: MSNPCQKEACAIQDCLLSHQYDDAKCAKVIDQLYICCSKFYNDNGKDSRSPCCPLPSLLELKMKQRKLTPGDS.

Residues 2–44 (SNPCQKEACAIQDCLLSHQYDDAKCAKVIDQLYICCSKFYNDN) enclose the CHCH domain. Short sequence motifs (cx9C motif) lie at residues 5 to 15 (CQKEACAIQDC) and 26 to 36 (CAKVIDQLYIC). Disulfide bonds link C5–C36 and C15–C26.

The protein belongs to the CMC4 family.

It localises to the mitochondrion intermembrane space. This chain is Cx9C motif-containing protein 4, mitochondrial (CMC4), found in Saccharomyces cerevisiae (strain ATCC 204508 / S288c) (Baker's yeast).